The following is a 322-amino-acid chain: Ribosomal lysine N-methyltransferase 5 (322 aa).

S-adenosyl-L-methionine contacts are provided by residues W92, 141–143, D163, W214, and M242; that span reads GTG.

Belongs to the class I-like SAM-binding methyltransferase superfamily. RKM5 family.

Its function is as follows. S-adenosyl-L-methionine-dependent protein-lysine N-methyltransferase that methylates 60S ribosomal protein L1. The protein is Ribosomal lysine N-methyltransferase 5 (RKM5) of Kluyveromyces lactis (strain ATCC 8585 / CBS 2359 / DSM 70799 / NBRC 1267 / NRRL Y-1140 / WM37) (Yeast).